Consider the following 188-residue polypeptide: Phosphatidylcholine-sterol acyltransferase (188 aa).

A glycan (N-linked (GlcNAc...) asparagine) is linked at asparagine 20. Residue histidine 169 is the Charge relay system of the active site.

It belongs to the AB hydrolase superfamily. Lipase family. As to expression, detected in blood plasma (at protein level).

The protein localises to the secreted. It carries out the reaction a sterol + a 1,2-diacyl-sn-glycero-3-phosphocholine = a sterol ester + a 1-acyl-sn-glycero-3-phosphocholine. The enzyme catalyses a 1-O-alkyl-2-acetyl-sn-glycero-3-phosphocholine + H2O = a 1-O-alkyl-sn-glycero-3-phosphocholine + acetate + H(+). The catalysed reaction is a 1-hexadecanoyl-2-acyl-sn-glycero-3-phosphocholine + (24S)-hydroxycholesterol = (24S)-24-hydroxycholesterol ester + 1-hexadecanoyl-sn-glycero-3-phosphocholine. It catalyses the reaction (24S)-hydroxycholesterol + 1-hexadecanoyl-2-(9Z,12Z-octadecadienoyl)-sn-glycero-3-phosphocholine = (24S)-hydroxycholesterol 3-linoleoate + 1-hexadecanoyl-sn-glycero-3-phosphocholine. It carries out the reaction 1-hexadecanoyl-2-(5Z,8Z,11Z,14Z-eicosatetraenoyl)-sn-glycero-3-phosphocholine + cholesterol = cholesteryl (5Z,8Z,11Z,14Z)-eicosatetraenoate + 1-hexadecanoyl-sn-glycero-3-phosphocholine. The enzyme catalyses 1-hexadecanoyl-2-(9Z-octadecenoyl)-sn-glycero-3-phosphocholine + cholesterol = cholesteryl (9Z-octadecenoate) + 1-hexadecanoyl-sn-glycero-3-phosphocholine. The catalysed reaction is 1-hexadecanoyl-2-(8Z,11Z,14Z-eicosatrienoyl)-sn-glycero-3-phosphocholine + cholesterol = cholesteryl (8Z,11Z,14Z)-eicosatrienoate + 1-hexadecanoyl-sn-glycero-3-phosphocholine. It catalyses the reaction 1-hexadecanoyl-2-(5Z,8Z,11Z-eicosatrienoyl)-sn-glycero-3-phosphocholine + cholesterol = cholesteryl (5Z,8Z,11Z)-eicosatrienoate + 1-hexadecanoyl-sn-glycero-3-phosphocholine. It carries out the reaction 1-hexadecanoyl-2-(5Z,8Z,11Z,14Z,17Z-eicosapentaenoyl)-sn-glycero-3-phosphocholine + cholesterol = (5Z,8Z,11Z,14Z,17Z-eicosapentaenoyl)-cholesterol + 1-hexadecanoyl-sn-glycero-3-phosphocholine. The enzyme catalyses 1-hexadecanoyl-2-(9Z,12Z-octadecadienoyl)-sn-glycero-3-phosphocholine + cholesterol = cholesteryl (9Z,12Z)-octadecadienoate + 1-hexadecanoyl-sn-glycero-3-phosphocholine. The catalysed reaction is 1-hexadecanoyl-2-(6Z,9Z,12Z-octadecatrienoyl)-sn-glycero-3-phosphocholine + cholesterol = (6Z,9Z,12Z-octadecatrienoyl)-cholesterol + 1-hexadecanoyl-sn-glycero-3-phosphocholine. It catalyses the reaction 1-hexadecanoyl-2-(11Z,14Z,17Z-eicosatrienoyl)-sn-glycero-3-phosphocholine + cholesterol = (11Z,14Z,17Z-eicosatrienoyl)-cholesterol + 1-hexadecanoyl-sn-glycero-3-phosphocholine. It carries out the reaction 1-hexadecanoyl-2-(9Z,12Z,15Z-octadecatrienoyl)-sn-glycero-3-phosphocholine + cholesterol = (9Z,12Z,15Z-octadecatrienoyl)-cholesterol + 1-hexadecanoyl-sn-glycero-3-phosphocholine. The enzyme catalyses 1-hexadecanoyl-2-(9Z,12Z-octadecadienoyl)-sn-glycero-3-phosphocholine + H2O = (9Z,12Z)-octadecadienoate + 1-hexadecanoyl-sn-glycero-3-phosphocholine + H(+). The catalysed reaction is 1-hexadecanoyl-2-(5Z,8Z,11Z,14Z-eicosatetraenoyl)-sn-glycero-3-phosphocholine + H2O = 1-hexadecanoyl-sn-glycero-3-phosphocholine + (5Z,8Z,11Z,14Z)-eicosatetraenoate + H(+). It catalyses the reaction a 1-O-alkyl-2-acetyl-sn-glycero-3-phosphocholine + 1-hexadecanoyl-sn-glycero-3-phosphocholine = 1-hexadecanoyl-2-acetyl-sn-glycero-3-phosphocholine + a 1-O-alkyl-sn-glycero-3-phosphocholine. Central enzyme in the extracellular metabolism of plasma lipoproteins. Synthesized mainly in the liver and secreted into plasma where it converts cholesterol and phosphatidylcholines (lecithins) to cholesteryl esters and lysophosphatidylcholines on the surface of high and low density lipoproteins (HDLs and LDLs). The cholesterol ester is then transported back to the liver. Also produced in the brain by primary astrocytes, and esterifies free cholesterol on nascent APOE-containing lipoproteins secreted from glia and influences cerebral spinal fluid (CSF) APOE- and APOA1 levels. Together with APOE and the cholesterol transporter ABCA1, plays a key role in the maturation of glial-derived, nascent lipoproteins. Required for remodeling high-density lipoprotein particles into their spherical forms. Has a preference for plasma 16:0-18:2 or 18:O-18:2 phosphatidylcholines. Catalyzes the hydrolysis of 1-O-alkyl-2-acetyl-sn-glycero-3-phosphocholine (platelet-activating factor or PAF) to 1-O-alkyl-sn-glycero-3-phosphocholine (lyso-PAF). Also catalyzes the transfer of the acetate group from PAF to 1-hexadecanoyl-sn-glycero-3-phosphocholine forming lyso-PAF. Catalyzes the esterification of (24S)-hydroxycholesterol (24(S)OH-C), also known as cerebrosterol to produce 24(S)OH-C monoesters. In Sus scrofa (Pig), this protein is Phosphatidylcholine-sterol acyltransferase (LCAT).